The sequence spans 195 residues: Small ribosomal subunit protein eS7 (195 aa).

A phosphothreonine mark is found at Thr146 and Thr151. 2 positions are modified to phosphoserine: Ser172 and Ser173.

This sequence belongs to the eukaryotic ribosomal protein eS7 family. In terms of assembly, component of the small ribosomal subunit (SSU). Mature yeast ribosomes consist of a small (40S) and a large (60S) subunit. The 40S small subunit contains 1 molecule of ribosomal RNA (18S rRNA) and at least 33 different proteins. The large 60S subunit contains 3 rRNA molecules (25S, 5.8S and 5S rRNA) and at least 46 different proteins. Interacts with snoRNA U3. uS11 interacts with MPP10. Component of the ribosomal small subunit (SSU) processome composed of at least 40 protein subunits and snoRNA U3.

The protein resides in the cytoplasm. Its subcellular location is the nucleus. It is found in the nucleolus. Functionally, component of the ribosome, a large ribonucleoprotein complex responsible for the synthesis of proteins in the cell. The small ribosomal subunit (SSU) binds messenger RNAs (mRNAs) and translates the encoded message by selecting cognate aminoacyl-transfer RNA (tRNA) molecules. The large subunit (LSU) contains the ribosomal catalytic site termed the peptidyl transferase center (PTC), which catalyzes the formation of peptide bonds, thereby polymerizing the amino acids delivered by tRNAs into a polypeptide chain. The nascent polypeptides leave the ribosome through a tunnel in the LSU and interact with protein factors that function in enzymatic processing, targeting, and the membrane insertion of nascent chains at the exit of the ribosomal tunnel. eS7 is involved in nucleolar processing of pre-18S ribosomal RNA and ribosome assembly. The sequence is that of Small ribosomal subunit protein eS7 (rps7) from Schizosaccharomyces pombe (strain 972 / ATCC 24843) (Fission yeast).